The sequence spans 490 residues: Glutamate--tRNA ligase 2 (490 aa).

The 'HIGH' region motif lies at 33–43 (PSPTGYLHIGG). Positions 262–266 (KLSKR) match the 'KMSKS' region motif. Lysine 265 is an ATP binding site.

This sequence belongs to the class-I aminoacyl-tRNA synthetase family. Glutamate--tRNA ligase type 1 subfamily. Monomer.

It localises to the cytoplasm. It carries out the reaction tRNA(Glu) + L-glutamate + ATP = L-glutamyl-tRNA(Glu) + AMP + diphosphate. Catalyzes the attachment of glutamate to tRNA(Glu) in a two-step reaction: glutamate is first activated by ATP to form Glu-AMP and then transferred to the acceptor end of tRNA(Glu). In Parvibaculum lavamentivorans (strain DS-1 / DSM 13023 / NCIMB 13966), this protein is Glutamate--tRNA ligase 2.